A 53-amino-acid chain; its full sequence is Light-harvesting protein B-800/820 alpha chain (53 aa).

The Cytoplasmic portion of the chain corresponds to 1–14 (MNQGKIWTVVNPAV). Residues 15-35 (GLPLLLGSVAITALLVHLAVL) traverse the membrane as a helical segment. His-31 contacts a bacteriochlorophyll. Residues 36–53 (THTTWFPAFTQGGLKKAA) lie on the Periplasmic side of the membrane.

This sequence belongs to the antenna complex alpha subunit family. The core complex is formed by different alpha and beta chains, binding bacteriochlorophyll molecules, and arranged most probably in tetrameric structures disposed around the reaction center. The non-pigmented gamma chains may constitute additional components.

The protein localises to the cell inner membrane. Functionally, antenna complexes are light-harvesting systems, which transfer the excitation energy to the reaction centers. The chain is Light-harvesting protein B-800/820 alpha chain from Rhodoblastus acidophilus (Rhodopseudomonas acidophila).